The following is an 83-amino-acid chain: Antitoxin ParD1 (83 aa).

Positions 33–60 (IRSALRLLEDRETQLRALREALEAGERS) form a coiled coil. Residues 54–83 (LEAGERSGSSTPFDFDGFLGRKRADASRGR) are disordered.

It belongs to the ParD antitoxin family.

Antitoxin component of a type II toxin-antitoxin (TA) system. The polypeptide is Antitoxin ParD1 (parD1) (Mycobacterium tuberculosis (strain CDC 1551 / Oshkosh)).